The primary structure comprises 181 residues: Isopentenyl-diphosphate Delta-isomerase (181 aa).

Mn(2+)-binding residues include histidine 24 and histidine 30. The Nudix hydrolase domain occupies leucine 28–threonine 168. The active site involves cysteine 68. A Mn(2+)-binding site is contributed by histidine 70. Glutamate 88 contributes to the Mg(2+) binding site. Residues glutamate 117 and glutamate 119 each coordinate Mn(2+). Glutamate 119 is a catalytic residue.

It belongs to the IPP isomerase type 1 family. Mg(2+) is required as a cofactor. Mn(2+) serves as cofactor.

The protein localises to the cytoplasm. The enzyme catalyses isopentenyl diphosphate = dimethylallyl diphosphate. It participates in isoprenoid biosynthesis; dimethylallyl diphosphate biosynthesis; dimethylallyl diphosphate from isopentenyl diphosphate: step 1/1. Its function is as follows. Catalyzes the 1,3-allylic rearrangement of the homoallylic substrate isopentenyl (IPP) to its highly electrophilic allylic isomer, dimethylallyl diphosphate (DMAPP). This chain is Isopentenyl-diphosphate Delta-isomerase, found in Aliivibrio fischeri (strain MJ11) (Vibrio fischeri).